A 499-amino-acid polypeptide reads, in one-letter code: Fumarate hydratase 2 (499 aa).

The interval 19 to 51 (ADVTLKQEDEQQERRSYSTPFREERDTFGPIQV) is disordered. Residues 23 to 45 (LKQEDEQQERRSYSTPFREERDT) show a composition bias toward basic and acidic residues. Substrate-binding positions include 134–136 (SGT), 164–167 (HPND), 174–176 (SSN), and Thr222. His223 (proton donor/acceptor) is an active-site residue. Residue Ser353 is part of the active site. Residues Ser354 and 359–361 (KVN) each bind substrate.

It belongs to the class-II fumarase/aspartase family. Fumarase subfamily. As to quaternary structure, homotetramer.

The protein resides in the cytoplasm. It localises to the cytosol. The catalysed reaction is (S)-malate = fumarate + H2O. With respect to regulation, fumarate hydratase activity (fumarate to L-malate) is strongly inhibited by phosphoenolpyruvate, citrate, oxaloacetate, ATP and ADP. Malate dehydratase activity (malate to fumarate) is activated by oxaloacetate, Asn and Gln. Malate dehydratase activity (malate to fumarate) is inhibited by citrate, succinate, ADP and ATP. In terms of biological role, cytosolic fumarate hydratase that catalyzes the reversible stereospecific interconversion of fumarate to L-malate. Catalyzes the dehydration of L-malate to fumarate in the cytosol: required for the massive fumarate accumulation during the day in plants grown under high nitrogen. Also required for acclimation of photosynthesis to cold: acts by mediating accumulation of fumarate at low temperature, leading to reduce accumulation of phosphorylated sugars. The sequence is that of Fumarate hydratase 2 from Arabidopsis thaliana (Mouse-ear cress).